A 343-amino-acid chain; its full sequence is Heat-inducible transcription repressor HrcA (343 aa).

The protein belongs to the HrcA family.

Its function is as follows. Negative regulator of class I heat shock genes (grpE-dnaK-dnaJ and groELS operons). Prevents heat-shock induction of these operons. The sequence is that of Heat-inducible transcription repressor HrcA from Thermobifida fusca (strain YX).